The sequence spans 457 residues: Zinc finger protein ZIPIC (457 aa).

A ZAD domain is found at 3–84 (CCICQFSVRV…ILELIHSPYM (82 aa)). C2H2-type zinc fingers lie at residues 257–280 (IQCPSCPEKFSSRRAYNVHTKREH), 284–306 (YVCDQCGKTLQSYSGFIGHLQNH), 312–334 (FACPVCPERFSRKFRLKHHMAWH), 340–362 (YQCDVCSKRFVHKVALYKHKMIH), 369–391 (LECQVCGFKTRTKAHLERHMRSH), and 397–419 (FACPVCNKRFSQMYNMKAHLREH). The segment at 430–448 (FHCSKCTHTFINEQNYDAH) adopts a C2H2-type 7; degenerate zinc-finger fold.

In terms of assembly, interacts (via region between the ZAD domain and the first zinc finger domain) with Cp190 (via centrosomal targeting M domain); the interaction is direct. Interacts with pita.

The protein resides in the nucleus. It localises to the chromosome. Insulator DNA-binding protein. Recruits Cp190 and cooperatively binds to chromatin promoter regions to exert transcriptional regulator and chromatin insulator functions. Chromatin insulators are regulatory elements that establish independent domains of transcriptional activity within eukaryotic genomes. Insulators are proposed to structure the chromatin fiber into independent domains of differing transcriptional potential by promoting the formation of distinct chromatin loops to form topologically associating domains (TADs). Chromatin binding sites often cluster with those of other insulator DNA-binding proteins such as pita, CTCF and BEAF-32, but not Su(Hw). This chain is Zinc finger protein ZIPIC, found in Drosophila melanogaster (Fruit fly).